Here is a 195-residue protein sequence, read N- to C-terminus: Translation machinery-associated protein 22 (195 aa).

In terms of domain architecture, SUI1 spans 94–165 (VLIKRIERNR…EAKEYIEKLL (72 aa)). Residues 176 to 195 (EQVDEKKKKKATAPGATPAA) are disordered.

The protein belongs to the DENR family. In terms of assembly, interacts with the 40S ribosomal subunit.

The protein localises to the cytoplasm. The protein is Translation machinery-associated protein 22 (TMA22) of Scheffersomyces stipitis (strain ATCC 58785 / CBS 6054 / NBRC 10063 / NRRL Y-11545) (Yeast).